We begin with the raw amino-acid sequence, 222 residues long: Protein GrpE (222 aa).

The disordered stretch occupies residues 1-82 (MSDFNKDEYL…KADDTLTPLG (82 aa)). Residues 20 to 71 (SGQAAPAAASADSAAAAAGATQEGAAQPAAAQSQENGDSAAADGADKAGAAD) are compositionally biased toward low complexity.

The protein belongs to the GrpE family. In terms of assembly, homodimer.

The protein localises to the cytoplasm. In terms of biological role, participates actively in the response to hyperosmotic and heat shock by preventing the aggregation of stress-denatured proteins, in association with DnaK and GrpE. It is the nucleotide exchange factor for DnaK and may function as a thermosensor. Unfolded proteins bind initially to DnaJ; upon interaction with the DnaJ-bound protein, DnaK hydrolyzes its bound ATP, resulting in the formation of a stable complex. GrpE releases ADP from DnaK; ATP binding to DnaK triggers the release of the substrate protein, thus completing the reaction cycle. Several rounds of ATP-dependent interactions between DnaJ, DnaK and GrpE are required for fully efficient folding. This Bifidobacterium adolescentis (strain ATCC 15703 / DSM 20083 / NCTC 11814 / E194a) protein is Protein GrpE.